A 345-amino-acid polypeptide reads, in one-letter code: Cytoskeleton protein RodZ (345 aa).

Residues 1–111 (MNTEASQDQT…LGKKHKKRDG (111 aa)) lie on the Cytoplasmic side of the membrane. One can recognise an HTH cro/C1-type domain in the interval 19–79 (LRQARESLGL…KLVHLPEDEL (61 aa)). Residues 30 to 49 (QQTVAERLCLKVSTIRDIEE) constitute a DNA-binding region (H-T-H motif). A helical; Signal-anchor for type II membrane protein transmembrane segment spans residues 112 to 132 (WLMSFTWLIVLVVLGLTGAWW). Residues 133–345 (WQNHQAQQAE…RVARLTVGVE (213 aa)) lie on the Periplasmic side of the membrane. The tract at residues 151–260 (SAQLSQNGGQ…LPTADAGVSG (110 aa)) is disordered. The segment covering 188-225 (PLTNHSGSAITNSATTSSVPKTTSTEPVDTANTNTTMH) has biased composition (polar residues). The segment covering 229–241 (AASAAVSPSQVPQ) has biased composition (low complexity).

Belongs to the RodZ family.

Its subcellular location is the cell inner membrane. Its function is as follows. Cytoskeletal protein that is involved in cell-shape control through regulation of the length of the long axis. This is Cytoskeleton protein RodZ from Yersinia pestis (strain Pestoides F).